The sequence spans 118 residues: Down syndrome critical region protein 4 (118 aa).

Residues 1–39 (MSLIILTRDDEPRIFTPDSDAASPALHSTSPLPDPASAS) are disordered. The segment covering 28 to 39 (STSPLPDPASAS) has biased composition (low complexity).

As to expression, mainly expressed in placenta.

This Homo sapiens (Human) protein is Down syndrome critical region protein 4 (DSCR4).